Reading from the N-terminus, the 124-residue chain is Small ribosomal subunit protein uS12 (124 aa).

At Asp89 the chain carries 3-methylthioaspartic acid. A disordered region spans residues Gln105–Ser124. Residues Lys108–Gly118 show a composition bias toward basic residues.

The protein belongs to the universal ribosomal protein uS12 family. As to quaternary structure, part of the 30S ribosomal subunit. Contacts proteins S8 and S17. May interact with IF1 in the 30S initiation complex.

Functionally, with S4 and S5 plays an important role in translational accuracy. In terms of biological role, interacts with and stabilizes bases of the 16S rRNA that are involved in tRNA selection in the A site and with the mRNA backbone. Located at the interface of the 30S and 50S subunits, it traverses the body of the 30S subunit contacting proteins on the other side and probably holding the rRNA structure together. The combined cluster of proteins S8, S12 and S17 appears to hold together the shoulder and platform of the 30S subunit. In Mycobacteroides abscessus (strain ATCC 19977 / DSM 44196 / CCUG 20993 / CIP 104536 / JCM 13569 / NCTC 13031 / TMC 1543 / L948) (Mycobacterium abscessus), this protein is Small ribosomal subunit protein uS12.